Consider the following 177-residue polypeptide: Large ribosomal subunit protein uL6 (177 aa).

The protein belongs to the universal ribosomal protein uL6 family. Part of the 50S ribosomal subunit.

In terms of biological role, this protein binds to the 23S rRNA, and is important in its secondary structure. It is located near the subunit interface in the base of the L7/L12 stalk, and near the tRNA binding site of the peptidyltransferase center. The polypeptide is Large ribosomal subunit protein uL6 (Dichelobacter nodosus (strain VCS1703A)).